Reading from the N-terminus, the 859-residue chain is DNA mismatch repair protein MutS (859 aa).

617-624 (GPNMGGKS) provides a ligand contact to ATP. The segment at 801–820 (TSLPHEVAPQAPGKPSVPQQ) is disordered.

Belongs to the DNA mismatch repair MutS family.

Functionally, this protein is involved in the repair of mismatches in DNA. It is possible that it carries out the mismatch recognition step. This protein has a weak ATPase activity. The polypeptide is DNA mismatch repair protein MutS (Pseudomonas fluorescens (strain ATCC BAA-477 / NRRL B-23932 / Pf-5)).